We begin with the raw amino-acid sequence, 218 residues long: Pyridoxine/pyridoxamine 5'-phosphate oxidase (218 aa).

Residues 12 to 15 (RLSY) and Arg70 each bind substrate. FMN-binding positions include 65–70 (RTVLLR), 80–81 (YT), Lys87, and Gln109. Residues Tyr127, Arg131, and Ser135 each contribute to the substrate site. Residues 145-146 (QS) and Trp191 contribute to the FMN site. Position 197 to 199 (197 to 199 (RLH)) interacts with substrate. Residue Arg201 participates in FMN binding.

This sequence belongs to the pyridoxamine 5'-phosphate oxidase family. Homodimer. Requires FMN as cofactor.

The catalysed reaction is pyridoxamine 5'-phosphate + O2 + H2O = pyridoxal 5'-phosphate + H2O2 + NH4(+). It carries out the reaction pyridoxine 5'-phosphate + O2 = pyridoxal 5'-phosphate + H2O2. It participates in cofactor metabolism; pyridoxal 5'-phosphate salvage; pyridoxal 5'-phosphate from pyridoxamine 5'-phosphate: step 1/1. It functions in the pathway cofactor metabolism; pyridoxal 5'-phosphate salvage; pyridoxal 5'-phosphate from pyridoxine 5'-phosphate: step 1/1. Catalyzes the oxidation of either pyridoxine 5'-phosphate (PNP) or pyridoxamine 5'-phosphate (PMP) into pyridoxal 5'-phosphate (PLP). This Acinetobacter baumannii (strain SDF) protein is Pyridoxine/pyridoxamine 5'-phosphate oxidase.